The sequence spans 542 residues: Chaperonin GroEL 1 (542 aa).

Residues Thr29 to Pro32, Asp86 to Thr90, Gly413, Asn477 to Ala479, and Asp493 contribute to the ATP site.

This sequence belongs to the chaperonin (HSP60) family. As to quaternary structure, forms a cylinder of 14 subunits composed of two heptameric rings stacked back-to-back. Interacts with the co-chaperonin GroES.

It is found in the cytoplasm. It carries out the reaction ATP + H2O + a folded polypeptide = ADP + phosphate + an unfolded polypeptide.. In terms of biological role, together with its co-chaperonin GroES, plays an essential role in assisting protein folding. The GroEL-GroES system forms a nano-cage that allows encapsulation of the non-native substrate proteins and provides a physical environment optimized to promote and accelerate protein folding. In Kineococcus radiotolerans (strain ATCC BAA-149 / DSM 14245 / SRS30216), this protein is Chaperonin GroEL 1.